Consider the following 1222-residue polypeptide: Serine/threonine-protein kinase WNK4 (1222 aa).

Residues 1 to 17 are compositionally biased toward polar residues; that stretch reads MLAPRNTETGVHMSQTE. Residues 1–163 form a disordered region; the sequence is MLAPRNTETG…KEDTETQAVA (163 aa). A Phosphoserine modification is found at serine 95. Residues 135 to 152 show a composition bias toward basic and acidic residues; it reads EPPRVPDAAARERRREQE. Glycyl lysine isopeptide (Lys-Gly) (interchain with G-Cter in ubiquitin) cross-links involve residues lysine 154 and lysine 172. Residues 171–429 enclose the Protein kinase domain; it reads LKFDIEIGRG…IQDLLTHAFF (259 aa). Serine 181 lines the ATP pocket. Glycyl lysine isopeptide (Lys-Gly) (interchain with G-Cter in ubiquitin) cross-links involve residues lysine 183, lysine 223, and lysine 238. ATP is bound by residues 251 to 254 and lysine 301; that span reads TELM. Aspartate 318 (proton acceptor) is an active-site residue. Lysine 325 participates in a covalent cross-link: Glycyl lysine isopeptide (Lys-Gly) (interchain with G-Cter in ubiquitin). A phosphoserine; by autocatalysis mark is found at serine 328 and serine 332. Residues lysine 384, lysine 390, lysine 447, and lysine 451 each participate in a glycyl lysine isopeptide (Lys-Gly) (interchain with G-Cter in ubiquitin) cross-link. The disordered stretch occupies residues 527–562; it reads LEVLPPDSGPPPATVSMTPGPPSAFPPEPEEPEADQ. Residues 533–553 show a composition bias toward pro residues; that stretch reads DSGPPPATVSMTPGPPSAFPP. The segment at 554 to 564 is interaction with KLHL3; it reads EPEEPEADQHQ. The residue at position 572 (serine 572) is a Phosphoserine. 5 disordered regions span residues 591–612, 626–679, 747–809, 836–873, and 927–1087; these read FLDA…PAEP, RSGP…SVSD, DAGP…GTPF, QVSS…SPLP, and SPGL…QPSP. Positions 627–638 are enriched in low complexity; the sequence is SGPGSDFSPGDS. The span at 659-672 shows a compositional bias: basic residues; it reads NPVKTLRRRPRSRL. Low complexity-rich tracts occupy residues 792–809 and 845–873; these read FSTS…GTPF and APSS…SPLP. The segment covering 935-946 has biased composition (pro residues); it reads PPAPPGPLPSMP. Residues 953 to 963 show a composition bias toward polar residues; the sequence is DQESLSAQTAE. A Glycyl lysine isopeptide (Lys-Gly) (interchain with G-Cter in ubiquitin) cross-link involves residue lysine 990. Positions 996 to 999 match the RFXV motif motif; the sequence is RFQV. At serine 1014 the chain carries Phosphoserine. Positions 1044–1056 are enriched in basic and acidic residues; sequence ETREALAESDRAA. Residues 1076–1086 show a composition bias toward polar residues; that stretch reads GGSSPILSQPS. Glycyl lysine isopeptide (Lys-Gly) (interchain with G-Cter in ubiquitin) cross-links involve residues lysine 1123, lysine 1136, and lysine 1137. The disordered stretch occupies residues 1169–1222; that stretch reads SKGSFPTSRRNSLQRSDLPGPGIMRRNSLSGSSTGSQEQRASKGVTFAGDVGRM. 2 stretches are compositionally biased toward polar residues: residues 1172 to 1183 and 1195 to 1207; these read SFPTSRRNSLQR and NSLS…SQEQ. Serine 1196 bears the Phosphoserine mark.

The protein belongs to the protein kinase superfamily. Ser/Thr protein kinase family. WNK subfamily. In terms of assembly, interacts with the C-terminal region of KCNJ1. Interacts with WNK1 and WNK3. Interacts with KLHL3. It depends on Mg(2+) as a cofactor. In terms of processing, autophosphorylated at Ser-328 and Ser-332, promoting its activation. Phosphorylated by WNK1 and WNK3. Phosphorylated at Ser-572 in a MAP3K15/ASK3-dependent process in response to osmotic stress or hypotonic low-chloride stimulation. Post-translationally, ubiquitinated by the BCR(KLHL3) complex, leading to its degradation. Also ubiquitinated by the BCR(KLHL2) complex.

It localises to the cell junction. The protein localises to the tight junction. The enzyme catalyses L-seryl-[protein] + ATP = O-phospho-L-seryl-[protein] + ADP + H(+). It catalyses the reaction L-threonyl-[protein] + ATP = O-phospho-L-threonyl-[protein] + ADP + H(+). Activation requires autophosphorylation of Ser-328 and Ser-332. Autophosphorylation and subsequent activation is inhibited by increases in intracellular ionic strength: Cl(-) potently inhibits WNK4 kinase activity via direct binding. Also inhibited by K(+) ions. Serine/threonine-protein kinase component of the WNK4-SPAK/OSR1 kinase cascade, which acts as a key regulator of ion transport in the distal nephron and blood pressure. The WNK4-SPAK/OSR1 kinase cascade is composed of WNK4, which mediates phosphorylation and activation of downstream kinases OXSR1/OSR1 and STK39/SPAK. Following activation, OXSR1/OSR1 and STK39/SPAK catalyze phosphorylation of ion cotransporters, such as SLC12A1/NKCC2, SLC12A2/NKCC1, SLC12A3/NCC, SLC12A5/KCC2 or SLC12A6/KCC3, regulating their activity. Acts as a molecular switch that regulates the balance between renal salt reabsorption and K(+) secretion by modulating the activities of renal transporters and channels, including the Na-Cl cotransporter SLC12A3/NCC and the K(+) channel, KCNJ1/ROMK. Regulates NaCl reabsorption in the distal nephron by activating the thiazide-sensitive Na-Cl cotransporter SLC12A3/NCC in distal convoluted tubule cells of kidney: activates SLC12A3/NCC in a OXSR1/OSR1- and STK39/SPAK-dependent process. Also acts as a scaffold protein independently of its protein kinase activity: negatively regulates cell membrane localization of various transporters and channels (CFTR, KCNJ1/ROMK, SLC4A4, SLC26A9 and TRPV4) by clathrin-dependent endocytosis. Also inhibits the activity of the epithelial Na(+) channel (ENaC) SCNN1A, SCNN1B, SCNN1D in a inase-independent mechanism. May also phosphorylate NEDD4L. The polypeptide is Serine/threonine-protein kinase WNK4 (Rattus norvegicus (Rat)).